Here is a 61-residue protein sequence, read N- to C-terminus: UPF0181 protein MS1074 (61 aa).

It belongs to the UPF0181 family.

The polypeptide is UPF0181 protein MS1074 (Mannheimia succiniciproducens (strain KCTC 0769BP / MBEL55E)).